A 236-amino-acid polypeptide reads, in one-letter code: MKKKIYEGSSKILYSAEEDFLLIMAFSDKAILETGETVDISGKGVLNNNISSFLMDKLEMIGIENHFIEKINMREQLIQYVEVFPIQVIISSVACSRFVKEFGMDEGYVFDKPIIDFKVRSREFKYPIVNEYQILNFGWLTRDEIKAVKEQALRIYDFLSGLFIGVGIRLVECKLEFGRVFNGEESIIMLTDEISPDNCRLWHINSNEKLGFELLEKEPNKVFESYQLIADRLKEK.

It belongs to the SAICAR synthetase family.

It carries out the reaction 5-amino-1-(5-phospho-D-ribosyl)imidazole-4-carboxylate + L-aspartate + ATP = (2S)-2-[5-amino-1-(5-phospho-beta-D-ribosyl)imidazole-4-carboxamido]succinate + ADP + phosphate + 2 H(+). The protein operates within purine metabolism; IMP biosynthesis via de novo pathway; 5-amino-1-(5-phospho-D-ribosyl)imidazole-4-carboxamide from 5-amino-1-(5-phospho-D-ribosyl)imidazole-4-carboxylate: step 1/2. This chain is Phosphoribosylaminoimidazole-succinocarboxamide synthase, found in Rickettsia massiliae (strain Mtu5).